Consider the following 576-residue polypeptide: Arginine--tRNA ligase (576 aa).

The 'HIGH' region motif lies at 122–132 (PNVAKEMHVGH).

This sequence belongs to the class-I aminoacyl-tRNA synthetase family. In terms of assembly, monomer.

It localises to the cytoplasm. The enzyme catalyses tRNA(Arg) + L-arginine + ATP = L-arginyl-tRNA(Arg) + AMP + diphosphate. The polypeptide is Arginine--tRNA ligase (Hamiltonella defensa subsp. Acyrthosiphon pisum (strain 5AT)).